Reading from the N-terminus, the 197-residue chain is Probable 26S proteasome non-ATPase regulatory subunit 9 (197 aa).

The PDZ domain maps to 75–166 (KIVVEMENEN…KIIRVTVIRE (92 aa)).

It belongs to the proteasome subunit p27 family.

In terms of biological role, acts as a chaperone during the assembly of the 26S proteasome, specifically of the base subcomplex of the 19S regulatory complex (RC). The sequence is that of Probable 26S proteasome non-ATPase regulatory subunit 9 (psmd-9) from Caenorhabditis elegans.